Consider the following 152-residue polypeptide: Endoribonuclease YbeY (152 aa).

The Zn(2+) site is built by H113, H117, and H123.

This sequence belongs to the endoribonuclease YbeY family. Zn(2+) serves as cofactor.

The protein localises to the cytoplasm. Functionally, single strand-specific metallo-endoribonuclease involved in late-stage 70S ribosome quality control and in maturation of the 3' terminus of the 16S rRNA. The protein is Endoribonuclease YbeY of Paracidovorax citrulli (strain AAC00-1) (Acidovorax citrulli).